The chain runs to 95 residues: Aspartyl/glutamyl-tRNA(Asn/Gln) amidotransferase subunit C (95 aa).

The tract at residues 51–95 is disordered; that stretch reads PTSHATLTSSRLREDVTRPSLPPEKSLANAPAKSDTSFAVPKIIE.

Belongs to the GatC family. As to quaternary structure, heterotrimer of A, B and C subunits.

The enzyme catalyses L-glutamyl-tRNA(Gln) + L-glutamine + ATP + H2O = L-glutaminyl-tRNA(Gln) + L-glutamate + ADP + phosphate + H(+). It carries out the reaction L-aspartyl-tRNA(Asn) + L-glutamine + ATP + H2O = L-asparaginyl-tRNA(Asn) + L-glutamate + ADP + phosphate + 2 H(+). Its function is as follows. Allows the formation of correctly charged Asn-tRNA(Asn) or Gln-tRNA(Gln) through the transamidation of misacylated Asp-tRNA(Asn) or Glu-tRNA(Gln) in organisms which lack either or both of asparaginyl-tRNA or glutaminyl-tRNA synthetases. The reaction takes place in the presence of glutamine and ATP through an activated phospho-Asp-tRNA(Asn) or phospho-Glu-tRNA(Gln). The sequence is that of Aspartyl/glutamyl-tRNA(Asn/Gln) amidotransferase subunit C from Myxococcus xanthus (strain DK1622).